A 492-amino-acid chain; its full sequence is Probable cytochrome P450 516B1 (492 aa).

Residues 1-17 (MYLILSLIIFLAYVAFH) traverse the membrane as a helical segment. Cysteine 438 serves as a coordination point for heme.

Belongs to the cytochrome P450 family. Heme serves as cofactor.

It localises to the membrane. This Dictyostelium discoideum (Social amoeba) protein is Probable cytochrome P450 516B1 (cyp516B1).